Here is a 640-residue protein sequence, read N- to C-terminus: 1,4-alpha-glucan branching enzyme GlgB (640 aa).

Aspartate 318 acts as the Nucleophile in catalysis. Glutamate 371 functions as the Proton donor in the catalytic mechanism.

This sequence belongs to the glycosyl hydrolase 13 family. GlgB subfamily. As to quaternary structure, monomer.

It carries out the reaction Transfers a segment of a (1-&gt;4)-alpha-D-glucan chain to a primary hydroxy group in a similar glucan chain.. The protein operates within glycan biosynthesis; glycogen biosynthesis. Functionally, catalyzes the formation of the alpha-1,6-glucosidic linkages in glycogen by scission of a 1,4-alpha-linked oligosaccharide from growing alpha-1,4-glucan chains and the subsequent attachment of the oligosaccharide to the alpha-1,6 position. In Francisella tularensis subsp. novicida (strain U112), this protein is 1,4-alpha-glucan branching enzyme GlgB.